Reading from the N-terminus, the 644-residue chain is Core protein VP4 (644 aa).

The protein belongs to the orbivirus VP4 family.

It is found in the virion. The VP4 protein is one of the five proteins (with VP1, VP3, VP6 and VP7) which form the inner capsid of the virus. The chain is Core protein VP4 (Segment-4) from Antilocapra americana (Pronghorn).